A 473-amino-acid polypeptide reads, in one-letter code: UTP--glucose-1-phosphate uridylyltransferase (473 aa).

UTP-binding positions include 89–92 (LNGG), Lys103, Gln166, and Gly195. Position 91-92 (91-92 (GG)) interacts with substrate. Substrate is bound by residues His196 and 224–226 (NSD). Residues Asp226 and Lys364 each coordinate UTP.

The protein belongs to the UDPGP type 1 family.

It localises to the cytoplasm. It carries out the reaction alpha-D-glucose 1-phosphate + UTP + H(+) = UDP-alpha-D-glucose + diphosphate. Its function is as follows. Plays a central role as a glucosyl donor in cellular metabolic pathways. The protein is UTP--glucose-1-phosphate uridylyltransferase of Hordeum vulgare (Barley).